We begin with the raw amino-acid sequence, 128 residues long: MASRLLRGVGALAAQALRRTARGAAVTRSMASGGGVPTDEEQATGLEREIMIAAQKGLDPYNMLPPKAASGTKEDPNLVPSISNKRIVGCICEEDNCTVIWFWLHKGESQRCPNCGTHYKLVPHQMAH.

The transit peptide at 1–30 (MASRLLRGVGALAAQALRRTARGAAVTRSM) directs the protein to the mitochondrion. N6-acetyllysine occurs at positions 67 and 85. Residues Cys-90, Cys-92, Cys-112, and Cys-115 each contribute to the Zn(2+) site. Lys-120 is modified (N6-acetyllysine).

This sequence belongs to the cytochrome c oxidase subunit 5B family. Component of the cytochrome c oxidase (complex IV, CIV), a multisubunit enzyme composed of 14 subunits. The complex is composed of a catalytic core of 3 subunits MT-CO1, MT-CO2 and MT-CO3, encoded in the mitochondrial DNA, and 11 supernumerary subunits COX4I, COX5A, COX5B, COX6A, COX6B, COX6C, COX7A, COX7B, COX7C, COX8 and NDUFA4, which are encoded in the nuclear genome. The complex exists as a monomer or a dimer and forms supercomplexes (SCs) in the inner mitochondrial membrane with NADH-ubiquinone oxidoreductase (complex I, CI) and ubiquinol-cytochrome c oxidoreductase (cytochrome b-c1 complex, complex III, CIII), resulting in different assemblies (supercomplex SCI(1)III(2)IV(1) and megacomplex MCI(2)III(2)IV(2)).

The protein resides in the mitochondrion inner membrane. It functions in the pathway energy metabolism; oxidative phosphorylation. Component of the cytochrome c oxidase, the last enzyme in the mitochondrial electron transport chain which drives oxidative phosphorylation. The respiratory chain contains 3 multisubunit complexes succinate dehydrogenase (complex II, CII), ubiquinol-cytochrome c oxidoreductase (cytochrome b-c1 complex, complex III, CIII) and cytochrome c oxidase (complex IV, CIV), that cooperate to transfer electrons derived from NADH and succinate to molecular oxygen, creating an electrochemical gradient over the inner membrane that drives transmembrane transport and the ATP synthase. Cytochrome c oxidase is the component of the respiratory chain that catalyzes the reduction of oxygen to water. Electrons originating from reduced cytochrome c in the intermembrane space (IMS) are transferred via the dinuclear copper A center (CU(A)) of subunit 2 and heme A of subunit 1 to the active site in subunit 1, a binuclear center (BNC) formed by heme A3 and copper B (CU(B)). The BNC reduces molecular oxygen to 2 water molecules using 4 electrons from cytochrome c in the IMS and 4 protons from the mitochondrial matrix. This Mus musculus (Mouse) protein is Cytochrome c oxidase subunit 5B, mitochondrial (Cox5b).